A 1724-amino-acid polypeptide reads, in one-letter code: Protein CHROMATIN REMODELING 5 (1724 aa).

2 disordered regions span residues 24-88 (QNAA…QSST) and 104-415 (DCQP…DDIE). Residues 25-34 (NAATFQSSPL) are compositionally biased toward polar residues. The segment covering 126–144 (EAYHSEDNHSNDRSEKLDS) has biased composition (basic and acidic residues). Positions 138–164 (RSEKLDSENENDNENEEEDNEMNKHQS) form a coiled coil. 4 stretches are compositionally biased toward acidic residues: residues 145–157 (ENENDNENEEEDN), 170–186 (PADEMLSDEYYEQDEDN), 239–264 (ADMDYEEEEDEDDPEDADFEPYDAAD), and 278–297 (VSDEDPESDEEIDLSDYEDD). A compositionally biased stretch (basic residues) spans 301–313 (KKPKVRQQSKGFR). A Nuclear localization signal 1 motif is present at residues 320 to 327 (ERKSFHVS). The segment covering 337-350 (QDDDSEEDSENDND) has biased composition (acidic residues). A compositionally biased stretch (polar residues) spans 362–376 (TLRQNNGRSTNTIGQ). Residues 403–412 (DGKNRKNQKD) are compositionally biased toward basic and acidic residues. In terms of domain architecture, Chromo 1 spans 420-499 (DVIEKVLWHQ…FKKVLNYTKK (80 aa)). Positions 505–525 (RYRTALSREEIEVNDVSKEMD) form a coiled coil. The Chromo 2 domain occupies 533–597 (SQVERIIADR…REVSIAVQGK (65 aa)). A Helicase ATP-binding domain is found at 637 to 809 (VNSWLNDTNV…WALLHFLDPG (173 aa)). Residue 650-657 (DEMGLGKT) coordinates ATP. The DEAH box signature appears at 760–763 (DEAH). Residues 943 to 1094 (ILDKLLVRLR…HLVIQKLNAE (152 aa)) form the Helicase C-terminal domain. Residues 1126–1163 (KEDKNDEESKKRLLSMDIDEILERAEQVEEKHTDETEH) adopt a coiled-coil conformation. The segment at 1199–1245 (ALAPRAARNTKSYVDPSHPDRTSKRKKKGSEPPEHTERSQKRRKTEY) is disordered. 2 short sequence motifs (nuclear localization signal) span residues 1224–1231 (KKKGSEPP) and 1348–1355 (LKRVQGLQ). The span at 1227–1237 (GSEPPEHTERS) shows a compositional bias: basic and acidic residues. Disordered stretches follow at residues 1480–1524 (QFKA…EMSD) and 1654–1724 (KFKT…FPPR). Over residues 1504-1520 (DGPRKTQKAEPLVKEEG) the composition is skewed to basic and acidic residues. Residues 1658–1667 (AGNSQGSQQV) are compositionally biased toward polar residues. The span at 1669–1691 (KGIDTAKFEAWKRRRRTENDVQT) shows a compositional bias: basic and acidic residues. The span at 1692-1702 (ERPTITNSNSL) shows a compositional bias: polar residues.

Belongs to the SNF2/RAD54 helicase family.

Its subcellular location is the nucleus. In terms of biological role, DNA-binding helicase that specifically binds to the promoter of target genes, leading to chromatin remodeling, possibly by promoting deposition of histone H3.3. Probable chromatin remodeling factor. The protein is Protein CHROMATIN REMODELING 5 of Arabidopsis thaliana (Mouse-ear cress).